We begin with the raw amino-acid sequence, 437 residues long: Sodium/bile acid cotransporter 4 (437 aa).

Residues methionine 1–histidine 103 lie on the Extracellular side of the membrane. N-linked (GlcNAc...) asparagine glycosylation is found at asparagine 6, asparagine 18, and asparagine 24. The disordered stretch occupies residues alanine 37 to proline 82. A compositionally biased stretch (low complexity) spans glycine 51 to proline 60. The chain crosses the membrane as a helical span at residues glycine 104–valine 124. The Cytoplasmic segment spans residues aspartate 125–leucine 140. The helical transmembrane segment at leucine 141 to phenylalanine 161 threads the bilayer. Residues lysine 162–serine 197 are Extracellular-facing. N-linked (GlcNAc...) asparagine glycosylation is found at asparagine 181 and asparagine 195. Residues isoleucine 198–isoleucine 218 form a helical membrane-spanning segment. The Cytoplasmic segment spans residues tyrosine 219–proline 233. Residues leucine 234–isoleucine 254 form a helical membrane-spanning segment. Topologically, residues arginine 255–lysine 267 are extracellular. A helical transmembrane segment spans residues valine 268–leucine 288. The Cytoplasmic segment spans residues glycine 289–glutamate 291. The chain crosses the membrane as a helical span at residues leucine 292 to tyrosine 312. The Extracellular segment spans residues alanine 313 to methionine 360. A helical transmembrane segment spans residues tyrosine 361–isoleucine 381. At tyrosine 382–leucine 437 the chain is on the cytoplasmic side.

Belongs to the bile acid:sodium symporter (BASS) (TC 2.A.28) family. Activated following N-terminal proteolytic cleavage by thrombin and/or proteases. In terms of tissue distribution, highly expressed in brain and small intestine, and moderately expressed in colon, heart, prostate, and testis. Very low levels were detected in kidney, liver, ovary, placenta, spleen, and thymus.

It is found in the cell membrane. Functionally, transporter for bile acids. The protein is Sodium/bile acid cotransporter 4 (SLC10A4) of Homo sapiens (Human).